A 377-amino-acid chain; its full sequence is Carbamoyl phosphate synthase small chain (377 aa).

Residues M1 to E186 are CPSase. 3 residues coordinate L-glutamine: S47, G238, and G240. The region spanning H190 to A377 is the Glutamine amidotransferase type-1 domain. The Nucleophile role is filled by C266. L267, Q270, N308, G310, and F311 together coordinate L-glutamine. Active-site residues include H350 and E352.

It belongs to the CarA family. In terms of assembly, composed of two chains; the small (or glutamine) chain promotes the hydrolysis of glutamine to ammonia, which is used by the large (or ammonia) chain to synthesize carbamoyl phosphate. Tetramer of heterodimers (alpha,beta)4.

The enzyme catalyses hydrogencarbonate + L-glutamine + 2 ATP + H2O = carbamoyl phosphate + L-glutamate + 2 ADP + phosphate + 2 H(+). It catalyses the reaction L-glutamine + H2O = L-glutamate + NH4(+). Its pathway is amino-acid biosynthesis; L-arginine biosynthesis; carbamoyl phosphate from bicarbonate: step 1/1. It participates in pyrimidine metabolism; UMP biosynthesis via de novo pathway; (S)-dihydroorotate from bicarbonate: step 1/3. In terms of biological role, small subunit of the glutamine-dependent carbamoyl phosphate synthetase (CPSase). CPSase catalyzes the formation of carbamoyl phosphate from the ammonia moiety of glutamine, carbonate, and phosphate donated by ATP, constituting the first step of 2 biosynthetic pathways, one leading to arginine and/or urea and the other to pyrimidine nucleotides. The small subunit (glutamine amidotransferase) binds and cleaves glutamine to supply the large subunit with the substrate ammonia. The protein is Carbamoyl phosphate synthase small chain of Neisseria meningitidis serogroup A / serotype 4A (strain DSM 15465 / Z2491).